Reading from the N-terminus, the 39-residue chain is Cytochrome b559 subunit beta (39 aa).

A helical membrane pass occupies residues 14–30 (WLTVHGLAVPTVSFLGS). His18 lines the heme pocket.

It belongs to the PsbE/PsbF family. In terms of assembly, heterodimer of an alpha subunit and a beta subunit. PSII is composed of 1 copy each of membrane proteins PsbA, PsbB, PsbC, PsbD, PsbE, PsbF, PsbH, PsbI, PsbJ, PsbK, PsbL, PsbM, PsbT, PsbX, PsbY, PsbZ, Psb30/Ycf12, at least 3 peripheral proteins of the oxygen-evolving complex and a large number of cofactors. It forms dimeric complexes. The cofactor is heme b.

The protein resides in the plastid. It is found in the chloroplast thylakoid membrane. Its function is as follows. This b-type cytochrome is tightly associated with the reaction center of photosystem II (PSII). PSII is a light-driven water:plastoquinone oxidoreductase that uses light energy to abstract electrons from H(2)O, generating O(2) and a proton gradient subsequently used for ATP formation. It consists of a core antenna complex that captures photons, and an electron transfer chain that converts photonic excitation into a charge separation. In Lactuca sativa (Garden lettuce), this protein is Cytochrome b559 subunit beta.